The following is a 311-amino-acid chain: Formimidoylglutamase (311 aa).

Mn(2+) contacts are provided by histidine 130, aspartate 155, histidine 157, aspartate 159, cysteine 242, and aspartate 244.

Belongs to the arginase family. Requires Mn(2+) as cofactor.

The catalysed reaction is N-formimidoyl-L-glutamate + H2O = formamide + L-glutamate. It functions in the pathway amino-acid degradation; L-histidine degradation into L-glutamate; L-glutamate from N-formimidoyl-L-glutamate (hydrolase route): step 1/1. Functionally, catalyzes the conversion of N-formimidoyl-L-glutamate to L-glutamate and formamide. This Staphylococcus aureus (strain Mu3 / ATCC 700698) protein is Formimidoylglutamase.